Consider the following 165-residue polypeptide: Basic transcription factor 3 (165 aa).

The NAC-A/B domain maps to 33-97 (TTDDKRLQST…PQTKKLQDIL (65 aa)). Polar residues predominate over residues 120–134 (QKQASGEGNAASATI). Residues 120-144 (QKQASGEGNAASATIQEEDDDDVPE) are disordered.

This sequence belongs to the NAC-beta family. As to quaternary structure, part of the nascent polypeptide-associated complex (NAC). Interacts with EIF(ISO)4E.

The chain is Basic transcription factor 3 from Arabidopsis thaliana (Mouse-ear cress).